A 398-amino-acid chain; its full sequence is MNKKWQWLVYGWKLIILTLLTAAVFSYAMFQGGFVSWFLFYAFLPFVLYAGLLALYPLRSFQASRQMDKTQLHAGDRLGVTVTLRRKLPFPLMYMVIEDCLPEGIESLNRDGAAAKRLVFPWFKRSMTMSYELARVPRGEHHFHSVRVRTGDVLGLIEKTAFFELDDTLFVYPFYQRFSYQVNERHQEDGVSGSSPIHQHHSSVAASVRNYQPGDRFAALDWKTSARRSQLMTKEFEPSRSKNLFLLMDRFSSDAFEEVVSVTASILHSVLKNGAGAGLASIGKEKNIFPIQEGDQHFKHMLRHLAIAHCDAADPISRYAREELGKPSVRQADQVVVTGQLTEDMLHLAEIGGGRVTVILAKEKDAELSQAENVMIERMMKRQIRVRIMRGGRVSRVV.

This is an uncharacterized protein from Bacillus subtilis (strain 168).